A 400-amino-acid chain; its full sequence is Argininosuccinate synthase (400 aa).

Residue 8 to 16 (AYSGGLDTS) coordinates ATP. Tyr87 contributes to the L-citrulline binding site. ATP is bound at residue Gly117. Residues Thr119, Asn123, and Asp124 each coordinate L-aspartate. Position 123 (Asn123) interacts with L-citrulline. Arg127, Ser175, Glu260, and Tyr272 together coordinate L-citrulline.

It belongs to the argininosuccinate synthase family. Type 1 subfamily. As to quaternary structure, homotetramer.

Its subcellular location is the cytoplasm. It carries out the reaction L-citrulline + L-aspartate + ATP = 2-(N(omega)-L-arginino)succinate + AMP + diphosphate + H(+). It participates in amino-acid biosynthesis; L-arginine biosynthesis; L-arginine from L-ornithine and carbamoyl phosphate: step 2/3. In Mycobacterium sp. (strain KMS), this protein is Argininosuccinate synthase.